The chain runs to 188 residues: PRA1 family protein 3 (188 aa).

Residue Met1 is modified to N-acetylmethionine. Residues 1 to 35 lie on the Cytoplasmic side of the membrane; sequence MEVQVAPLRSWEDFFPGSDRFGRPDFKDISKWNNR. 2 helical membrane-spanning segments follow: residues 36–56 and 57–77; these read VVNN…AVVA and IVGF…ILVF. At 78 to 93 the chain is on the cytoplasmic side; that stretch reads LGFVWVSHNKDILRRM. A run of 2 helical transmembrane segments spans residues 94–114 and 115–135; these read KKQY…FLIS and YLGD…LMFI. Over 136 to 188 the chain is Cytoplasmic; that stretch reads HASLRLRNIKNKLENKKEEIGLKKTPMGIILDALEQQEDNINKLASYIPKVKE. Positions 136 to 188 are targeting to endoplasmic reticulum membrane; that stretch reads HASLRLRNIKNKLENKKEEIGLKKTPMGIILDALEQQEDNINKLASYIPKVKE.

It belongs to the PRA1 family. Binds to prenylated RAB and Ras superfamily members.

It is found in the endoplasmic reticulum membrane. It localises to the cell membrane. The protein localises to the cytoplasm. Its subcellular location is the cytoskeleton. Its function is as follows. Regulates intracellular concentrations of taurine and glutamate. Negatively modulates SLC1A1/EAAC1 glutamate transport activity by decreasing its affinity for glutamate in a PKC activity-dependent manner. May be involved in membrane traffic. This Gallus gallus (Chicken) protein is PRA1 family protein 3 (ARL6IP5).